Consider the following 327-residue polypeptide: Tryptophan--tRNA ligase (327 aa).

ATP-binding positions include 9–11 and 17–18; these read QPS and GN. Positions 10 to 18 match the 'HIGH' region motif; sequence PSGDIHIGN. An L-tryptophan-binding site is contributed by Asp-132. Residues 144–146, Ile-183, and 192–196 contribute to the ATP site; these read GED and KMSKS. Positions 192–196 match the 'KMSKS' region motif; sequence KMSKS.

It belongs to the class-I aminoacyl-tRNA synthetase family. As to quaternary structure, homodimer.

The protein resides in the cytoplasm. It catalyses the reaction tRNA(Trp) + L-tryptophan + ATP = L-tryptophyl-tRNA(Trp) + AMP + diphosphate + H(+). Catalyzes the attachment of tryptophan to tRNA(Trp). The polypeptide is Tryptophan--tRNA ligase (Caldanaerobacter subterraneus subsp. tengcongensis (strain DSM 15242 / JCM 11007 / NBRC 100824 / MB4) (Thermoanaerobacter tengcongensis)).